Here is a 94-residue protein sequence, read N- to C-terminus: Large ribosomal subunit protein eL14 (94 aa).

It belongs to the eukaryotic ribosomal protein eL14 family.

In Methanopyrus kandleri (strain AV19 / DSM 6324 / JCM 9639 / NBRC 100938), this protein is Large ribosomal subunit protein eL14.